A 222-amino-acid polypeptide reads, in one-letter code: Superoxide dismutase [Mn], mitochondrial (222 aa).

The transit peptide at 1 to 24 directs the protein to the mitochondrion; it reads MLSRAVCGTSRQLAPVLGYLGSRQ. Position 50 (His50) interacts with Mn(2+). 3'-nitrotyrosine is present on Tyr58. N6-acetyllysine; alternate occurs at positions 68 and 75. N6-succinyllysine; alternate is present on residues Lys68 and Lys75. His98 provides a ligand contact to Mn(2+). At Lys114 the chain carries N6-acetyllysine. 2 positions are modified to N6-acetyllysine; alternate: Lys122 and Lys130. N6-succinyllysine; alternate occurs at positions 122 and 130. 2 residues coordinate Mn(2+): Asp183 and His187. Lys202 carries the post-translational modification N6-acetyllysine.

Belongs to the iron/manganese superoxide dismutase family. In terms of assembly, homotetramer. Mn(2+) is required as a cofactor. Post-translationally, nitrated under oxidative stress. Nitration coupled with oxidation inhibits the catalytic activity. In terms of processing, acetylation at Lys-122 decreases enzymatic activity. Deacetylated by SIRT3 upon exposure to ionizing radiations or after long fasting. Polyubiquitinated; leading to proteasomal degradation. Deubiquitinated by USP36 which increases protein stability.

It is found in the mitochondrion matrix. It carries out the reaction 2 superoxide + 2 H(+) = H2O2 + O2. Destroys superoxide anion radicals which are normally produced within the cells and which are toxic to biological systems. The sequence is that of Superoxide dismutase [Mn], mitochondrial (SOD2) from Homo sapiens (Human).